The primary structure comprises 129 residues: uncharacterized protein (129 aa).

The protein belongs to the asfivirus C129R family.

It is found in the virion. In terms of biological role, plays a role in the inhibition of type I interferon signaling pathway. Mechanistically, specifically interacts with 2',3'-cGAMP and cleaves it via its phosphodiesterase activity. In turn, prevents 2',3'-cGAMP interaction with host ER-resident STING1 leading to inhibition of downstream signaling pathway and type I interferon production. This is an uncharacterized protein from African swine fever virus (isolate Pig/Kenya/KEN-50/1950) (ASFV).